Here is a 174-residue protein sequence, read N- to C-terminus: DNA-directed RNA polymerase IV subunit 7 (174 aa).

The protein belongs to the eukaryotic RPB7/RPC8 RNA polymerase subunit family. As to quaternary structure, component of the RNA polymerase IV complex. Interacts with NRPD1.

It is found in the nucleus. In terms of biological role, DNA-dependent RNA polymerase catalyzes the transcription of DNA into RNA using the four ribonucleoside triphosphates as substrates. Component of RNA polymerase IV which mediates 24-nt short-interfering RNAs (siRNA) accumulation. Implicated in siRNA-directed heterochromatin formation through the action of DCL3 and AGO4, and subsequent DNA methylation-dependent silencing of targeted sequences. Essential component of a self-reinforcing loop coupling de novo DNA methylation to siRNA production. Required for intercellular but not intracellular RNA interference (RNAi) leading to systemic post-transcriptional gene silencing. Involved in the maintenance of post-transcriptional RNA silencing. This chain is DNA-directed RNA polymerase IV subunit 7 (NRPD7), found in Arabidopsis thaliana (Mouse-ear cress).